Consider the following 392-residue polypeptide: Anhydro-N-acetylmuramic acid kinase (392 aa).

19–26 provides a ligand contact to ATP; it reads GTSVDGID.

The protein belongs to the anhydro-N-acetylmuramic acid kinase family.

The enzyme catalyses 1,6-anhydro-N-acetyl-beta-muramate + ATP + H2O = N-acetyl-D-muramate 6-phosphate + ADP + H(+). The protein operates within amino-sugar metabolism; 1,6-anhydro-N-acetylmuramate degradation. It functions in the pathway cell wall biogenesis; peptidoglycan recycling. In terms of biological role, catalyzes the specific phosphorylation of 1,6-anhydro-N-acetylmuramic acid (anhMurNAc) with the simultaneous cleavage of the 1,6-anhydro ring, generating MurNAc-6-P. Is required for the utilization of anhMurNAc either imported from the medium or derived from its own cell wall murein, and thus plays a role in cell wall recycling. In Trichormus variabilis (strain ATCC 29413 / PCC 7937) (Anabaena variabilis), this protein is Anhydro-N-acetylmuramic acid kinase.